The chain runs to 483 residues: Trigger factor (483 aa).

Positions 166-251 (TDTVNIDYVG…INDVFTKEKP (86 aa)) constitute a PPIase FKBP-type domain. The segment covering 435 to 460 (GEEPKLSTTKKVVEPTEEKTRKDSKM) has biased composition (basic and acidic residues). Residues 435 to 483 (GEEPKLSTTKKVVEPTEEKTRKDSKMSTKKPAAKPAAKPAAATKKPVKK) are disordered. Residues 467-483 (AKPAAKPAAATKKPVKK) are compositionally biased toward low complexity.

The protein belongs to the FKBP-type PPIase family. Tig subfamily.

The protein localises to the cytoplasm. The enzyme catalyses [protein]-peptidylproline (omega=180) = [protein]-peptidylproline (omega=0). Its function is as follows. Involved in protein export. Acts as a chaperone by maintaining the newly synthesized protein in an open conformation. Functions as a peptidyl-prolyl cis-trans isomerase. This is Trigger factor from Mycoplasma mobile (strain ATCC 43663 / 163K / NCTC 11711) (Mesomycoplasma mobile).